We begin with the raw amino-acid sequence, 108 residues long: Protein YcgL (108 aa).

The region spanning 12-96 is the YcgL domain; sequence MFCVIYRSSK…SPEDLLKQHL (85 aa).

This chain is Protein YcgL, found in Shigella dysenteriae serotype 1 (strain Sd197).